The sequence spans 156 residues: Small ribosomal subunit protein uS7 (156 aa).

The protein belongs to the universal ribosomal protein uS7 family. In terms of assembly, part of the 30S ribosomal subunit. Contacts proteins S9 and S11.

Its function is as follows. One of the primary rRNA binding proteins, it binds directly to 16S rRNA where it nucleates assembly of the head domain of the 30S subunit. Is located at the subunit interface close to the decoding center, probably blocks exit of the E-site tRNA. The chain is Small ribosomal subunit protein uS7 from Aromatoleum aromaticum (strain DSM 19018 / LMG 30748 / EbN1) (Azoarcus sp. (strain EbN1)).